Reading from the N-terminus, the 151-residue chain is Neuroglobin (151 aa).

In terms of domain architecture, Globin spans 1–149 (MERPEPELIR…VVQAMSRGWD (149 aa)). The heme b site is built by H64 and H96.

It belongs to the globin family. In terms of assembly, monomer. Homodimer and homotetramer; disulfide-linked. Mainly monomeric but also detected as part of homodimers and homotetramers. Interacts with 14-3-3 proteins; regulates the phosphorylation of NGB. Could interact (ferrous form) with G-alpha(i) proteins (GTP-bound form). Phosphorylated during hypoxia by ERK1/ERK2. Phosphorylation regulates the heme pocket hexacoordination preventing the association of His-64 with the heme metal center. Thereby, promotes the access of dioxygen and nitrite to the heme and stimulates the nitrite reductase activity. Phosphorylation during hypoxia is stabilized by 14-3-3 proteins.

Its subcellular location is the cytoplasm. The protein resides in the cytosol. It localises to the mitochondrion matrix. The catalysed reaction is Fe(III)-heme b-[protein] + nitric oxide + H2O = Fe(II)-heme b-[protein] + nitrite + 2 H(+). Monomeric globin with a bis-histidyl six-coordinate heme-iron atom through which it can bind dioxygen, carbon monoxide and nitric oxide. Could help transport oxygen and increase its availability to the metabolically active neuronal tissues, though its low quantity in tissues as well as its high affinity for dioxygen, which may limit its oxygen-releasing ability, argue against it. The ferrous/deoxygenated form exhibits a nitrite reductase activity and it could produce nitric oxide which in turn inhibits cellular respiration in response to hypoxia. In its ferrous/deoxygenated state, it may also exhibit GDI (Guanine nucleotide Dissociation Inhibitor) activity toward heterotrimeric G-alpha proteins, thereby regulating signal transduction to facilitate neuroprotective responses in the wake of hypoxia and associated oxidative stress. The chain is Neuroglobin from Canis lupus familiaris (Dog).